A 356-amino-acid chain; its full sequence is Protein-glutamate methylesterase/protein-glutamine glutaminase 2 (356 aa).

The Response regulatory domain occupies Arg4–Glu121. Asp55 carries the post-translational modification 4-aspartylphosphate. The CheB-type methylesterase domain maps to Lys161–Gly356. Catalysis depends on residues Ser173, His200, and Asp300.

This sequence belongs to the CheB family. Phosphorylated by CheA. Phosphorylation of the N-terminal regulatory domain activates the methylesterase activity.

Its subcellular location is the cytoplasm. The catalysed reaction is [protein]-L-glutamate 5-O-methyl ester + H2O = L-glutamyl-[protein] + methanol + H(+). It carries out the reaction L-glutaminyl-[protein] + H2O = L-glutamyl-[protein] + NH4(+). Involved in chemotaxis. Part of a chemotaxis signal transduction system that modulates chemotaxis in response to various stimuli. Catalyzes the demethylation of specific methylglutamate residues introduced into the chemoreceptors (methyl-accepting chemotaxis proteins or MCP) by CheR. Also mediates the irreversible deamidation of specific glutamine residues to glutamic acid. The chain is Protein-glutamate methylesterase/protein-glutamine glutaminase 2 from Methanosarcina acetivorans (strain ATCC 35395 / DSM 2834 / JCM 12185 / C2A).